The primary structure comprises 208 residues: UPF0301 protein MAB_4928c (208 aa).

The protein belongs to the UPF0301 (AlgH) family.

This Mycobacteroides abscessus (strain ATCC 19977 / DSM 44196 / CCUG 20993 / CIP 104536 / JCM 13569 / NCTC 13031 / TMC 1543 / L948) (Mycobacterium abscessus) protein is UPF0301 protein MAB_4928c.